The following is a 129-amino-acid chain: Glycine cleavage system H protein (129 aa).

A Lipoyl-binding domain is found at 23–104 (TATIGITQHA…AYAAWLFRLK (82 aa)). The residue at position 64 (Lys-64) is an N6-lipoyllysine.

It belongs to the GcvH family. As to quaternary structure, the glycine cleavage system is composed of four proteins: P, T, L and H. It depends on (R)-lipoate as a cofactor.

The glycine cleavage system catalyzes the degradation of glycine. The H protein shuttles the methylamine group of glycine from the P protein to the T protein. The protein is Glycine cleavage system H protein of Nitrosospira multiformis (strain ATCC 25196 / NCIMB 11849 / C 71).